Here is a 218-residue protein sequence, read N- to C-terminus: Thiopurine S-methyltransferase (218 aa).

Positions 10, 45, 66, and 123 each coordinate S-adenosyl-L-methionine.

Belongs to the class I-like SAM-binding methyltransferase superfamily. TPMT family.

The protein resides in the cytoplasm. The catalysed reaction is S-adenosyl-L-methionine + a thiopurine = S-adenosyl-L-homocysteine + a thiopurine S-methylether.. The chain is Thiopurine S-methyltransferase from Shewanella sp. (strain W3-18-1).